The following is a 117-amino-acid chain: Large-conductance mechanosensitive channel (117 aa).

The next 3 membrane-spanning stretches (helical) occupy residues 7–27 (EFAL…GAAF), 30–50 (IVTS…FGSV), and 64–84 (GLFI…FIFV).

It belongs to the MscL family. In terms of assembly, homopentamer.

The protein resides in the cell membrane. Its function is as follows. Channel that opens in response to stretch forces in the membrane lipid bilayer. May participate in the regulation of osmotic pressure changes within the cell. This is Large-conductance mechanosensitive channel from Staphylococcus haemolyticus (strain JCSC1435).